The sequence spans 474 residues: L-arabinose isomerase (474 aa).

Positions 306, 331, 348, and 447 each coordinate Mn(2+).

This sequence belongs to the arabinose isomerase family. The cofactor is Mn(2+).

It catalyses the reaction beta-L-arabinopyranose = L-ribulose. The protein operates within carbohydrate degradation; L-arabinose degradation via L-ribulose; D-xylulose 5-phosphate from L-arabinose (bacterial route): step 1/3. Its function is as follows. Catalyzes the conversion of L-arabinose to L-ribulose. The sequence is that of L-arabinose isomerase from Pediococcus pentosaceus (strain ATCC 25745 / CCUG 21536 / LMG 10740 / 183-1w).